Here is a 641-residue protein sequence, read N- to C-terminus: Mannosyl-oligosaccharide 1,2-alpha-mannosidase IB (641 aa).

T2 is modified (N-acetylthreonine). Residues 2–36 are Cytoplasmic-facing; it reads TTPALLPLSGRRIPPLNLGPPSFPHHRATLRLSEK. The helical; Signal-anchor for type II membrane protein transmembrane segment at 37–57 threads the bilayer; sequence FILLLILSAFITLCFGAFFFL. The Lumenal portion of the chain corresponds to 58 to 641; it reads PDSSKHKRFD…TTLSGNPAVR (584 aa). Residues 153–175 are disordered; that stretch reads NKPLPPVPIPNLVGIRGGDPEDN. A disulfide bond links C462 and C494. Residue E508 is the Proton donor of the active site. T619 is a Ca(2+) binding site. N631 is a glycosylation site (N-linked (GlcNAc...) asparagine).

Belongs to the glycosyl hydrolase 47 family. Requires Ca(2+) as cofactor. Highest levels of expression in placenta and testis.

It is found in the golgi apparatus membrane. It catalyses the reaction N(4)-(alpha-D-Man-(1-&gt;2)-alpha-D-Man-(1-&gt;2)-alpha-D-Man-(1-&gt;3)-[alpha-D-Man-(1-&gt;2)-alpha-D-Man-(1-&gt;3)-[alpha-D-Man-(1-&gt;2)-alpha-D-Man-(1-&gt;6)]-alpha-D-Man-(1-&gt;6)]-beta-D-Man-(1-&gt;4)-beta-D-GlcNAc-(1-&gt;4)-beta-D-GlcNAc)-L-asparaginyl-[protein] (N-glucan mannose isomer 9A1,2,3B1,2,3) + 4 H2O = N(4)-(alpha-D-Man-(1-&gt;3)-[alpha-D-Man-(1-&gt;3)-[alpha-D-Man-(1-&gt;6)]-alpha-D-Man-(1-&gt;6)]-beta-D-Man-(1-&gt;4)-beta-D-GlcNAc-(1-&gt;4)-beta-D-GlcNAc)-L-asparaginyl-[protein] (N-glucan mannose isomer 5A1,2) + 4 beta-D-mannose. The enzyme catalyses N(4)-(alpha-D-Man-(1-&gt;2)-alpha-D-Man-(1-&gt;2)-alpha-D-Man-(1-&gt;3)-[alpha-D-Man-(1-&gt;3)-[alpha-D-Man-(1-&gt;2)-alpha-D-Man-(1-&gt;6)]-alpha-D-Man-(1-&gt;6)]-beta-D-Man-(1-&gt;4)-beta-D-GlcNAc-(1-&gt;4)-beta-D-GlcNAc)-L-asparaginyl-[protein] (N-glucan mannose isomer 8A1,2,3B1,3) + 3 H2O = N(4)-(alpha-D-Man-(1-&gt;3)-[alpha-D-Man-(1-&gt;3)-[alpha-D-Man-(1-&gt;6)]-alpha-D-Man-(1-&gt;6)]-beta-D-Man-(1-&gt;4)-beta-D-GlcNAc-(1-&gt;4)-beta-D-GlcNAc)-L-asparaginyl-[protein] (N-glucan mannose isomer 5A1,2) + 3 beta-D-mannose. The protein operates within protein modification; protein glycosylation. With respect to regulation, inhibited by both 1-deoxymannojirimycin and kifunensine. In terms of biological role, involved in the maturation of Asn-linked oligosaccharides. Progressively trim alpha-1,2-linked mannose residues from Man(9)GlcNAc(2) to produce Man(5)GlcNAc(2). The chain is Mannosyl-oligosaccharide 1,2-alpha-mannosidase IB (MAN1A2) from Homo sapiens (Human).